The chain runs to 441 residues: Gamma-glutamyl phosphate reductase (441 aa).

It belongs to the gamma-glutamyl phosphate reductase family.

The protein localises to the cytoplasm. It carries out the reaction L-glutamate 5-semialdehyde + phosphate + NADP(+) = L-glutamyl 5-phosphate + NADPH + H(+). Its pathway is amino-acid biosynthesis; L-proline biosynthesis; L-glutamate 5-semialdehyde from L-glutamate: step 2/2. Its function is as follows. Catalyzes the NADPH-dependent reduction of L-glutamate 5-phosphate into L-glutamate 5-semialdehyde and phosphate. The product spontaneously undergoes cyclization to form 1-pyrroline-5-carboxylate. This Hydrogenobaculum sp. (strain Y04AAS1) protein is Gamma-glutamyl phosphate reductase.